Here is a 525-residue protein sequence, read N- to C-terminus: GMP synthase [glutamine-hydrolyzing] (525 aa).

One can recognise a Glutamine amidotransferase type-1 domain in the interval 8–207; it reads KILILDFGSQ…ALDICGCAAN (200 aa). The active-site Nucleophile is the Cys85. Catalysis depends on residues His181 and Glu183. A GMPS ATP-PPase domain is found at 208–400; it reads WKPSSIIEDA…LGLPYNMLYR (193 aa). 235 to 241 lines the ATP pocket; that stretch reads SGGVDSS.

As to quaternary structure, homodimer.

The catalysed reaction is XMP + L-glutamine + ATP + H2O = GMP + L-glutamate + AMP + diphosphate + 2 H(+). Its pathway is purine metabolism; GMP biosynthesis; GMP from XMP (L-Gln route): step 1/1. In terms of biological role, catalyzes the synthesis of GMP from XMP. This chain is GMP synthase [glutamine-hydrolyzing], found in Shewanella baltica (strain OS155 / ATCC BAA-1091).